Consider the following 391-residue polypeptide: GTPase Obg (391 aa).

An Obg domain is found at M1–L159. Positions A160–K333 constitute an OBG-type G domain. GTP-binding positions include G166–S173, F191–V195, D213–G216, N283–D286, and S314–I316. S173 and T193 together coordinate Mg(2+).

This sequence belongs to the TRAFAC class OBG-HflX-like GTPase superfamily. OBG GTPase family. In terms of assembly, monomer. Mg(2+) is required as a cofactor.

The protein localises to the cytoplasm. An essential GTPase which binds GTP, GDP and possibly (p)ppGpp with moderate affinity, with high nucleotide exchange rates and a fairly low GTP hydrolysis rate. Plays a role in control of the cell cycle, stress response, ribosome biogenesis and in those bacteria that undergo differentiation, in morphogenesis control. The chain is GTPase Obg from Photorhabdus laumondii subsp. laumondii (strain DSM 15139 / CIP 105565 / TT01) (Photorhabdus luminescens subsp. laumondii).